The primary structure comprises 116 residues: Toxin CSTX-10 (116 aa).

An N-terminal signal peptide occupies residues 1-20 (MKVLVIFAVLSLVIFSNCSA). Positions 21-47 (ETDEDFFGEESFEADDIIPFIAKEQVR) are excised as a propeptide. 4 cysteine pairs are disulfide-bonded: Cys-53–Cys-68, Cys-60–Cys-77, Cys-67–Cys-94, and Cys-79–Cys-92.

Expressed by the venom gland.

It is found in the secreted. The protein resides in the target cell membrane. In terms of biological role, spider venom toxin that shows calcium channel blocking activity and exhibits cytolytic activity by affecting the outer leaflet curvature and/or pore formation across the membrane. It blocks L-type calcium channels (Cav1/CACNA1) in mammalian neurons at nanomolar concentrations. Furthermore, it produces a slow voltage-independent block of mid/low and high voltage-activated calcium channels in cockroach neurons. Potassium ions, histamine, M-ctenitoxin-Cs1a (AC P83619), CSTX-9 (AC P58604), and CSTX-13 (AC P83919) synergistically increase the insecticidal activity of this toxin. In vivo, it causes paralysis in blow flies and provokes death in drosophila. This chain is Toxin CSTX-10, found in Cupiennius salei (American wandering spider).